A 196-amino-acid chain; its full sequence is Cell division protein SepF (196 aa).

The tract at residues 15-80 is disordered; the sequence is VEDDEEFNEP…PKRSASTFSK (66 aa). Over residues 56–79 the composition is skewed to polar residues; the sequence is RPAQSTPKPQAQTAAPKRSASTFS.

This sequence belongs to the SepF family. Homodimer. Interacts with FtsZ.

The protein localises to the cytoplasm. Functionally, cell division protein that is part of the divisome complex and is recruited early to the Z-ring. Probably stimulates Z-ring formation, perhaps through the cross-linking of FtsZ protofilaments. Its function overlaps with FtsA. This is Cell division protein SepF from Lactococcus lactis subsp. cremoris (strain SK11).